A 341-amino-acid chain; its full sequence is Src kinase-associated phosphoprotein 2 (341 aa).

The tract at residues 54-95 (FKDRRDEEFPEPDEADTNDGGSLHSEQTDRDDENAYDGVQQS) is disordered. Over residues 61–70 (EFPEPDEADT) the composition is skewed to acidic residues. Residues 105–208 (AVLKSGYLEK…WVEHIDFLIK (104 aa)) form the PH domain. The interval 246–265 (EEDVPQPSKPKVTLVNKPPP) is disordered. Residues 279–340 (DYANYFQGLW…PKEYLLELYV (62 aa)) enclose the SH3 domain.

It belongs to the SKAP family. Post-translationally, phosphorylated on tyrosines.

The protein resides in the cytoplasm. Its function is as follows. May be involved in B-cell and macrophage adhesion processes. May play a role in src signaling pathway. The sequence is that of Src kinase-associated phosphoprotein 2 (skap2) from Danio rerio (Zebrafish).